Here is a 317-residue protein sequence, read N- to C-terminus: Small ribosomal subunit protein uS2 (317 aa).

Disordered regions lie at residues 1–30 (MENENLKVEQATTAENNMAEKADDSKASKE) and 293–317 (RSFEQNSAEGVKTVEKTTTSTEVAE). Over residues 18–30 (MAEKADDSKASKE) the composition is skewed to basic and acidic residues. Over residues 308–317 (KTTTSTEVAE) the composition is skewed to low complexity.

It belongs to the universal ribosomal protein uS2 family.

In Mycoplasmopsis agalactiae (strain NCTC 10123 / CIP 59.7 / PG2) (Mycoplasma agalactiae), this protein is Small ribosomal subunit protein uS2.